The sequence spans 273 residues: 2,3,4,5-tetrahydropyridine-2,6-dicarboxylate N-succinyltransferase (273 aa).

Residues Arg-104 and Asp-141 each contribute to the substrate site.

This sequence belongs to the transferase hexapeptide repeat family. As to quaternary structure, homotrimer.

The protein resides in the cytoplasm. The enzyme catalyses (S)-2,3,4,5-tetrahydrodipicolinate + succinyl-CoA + H2O = (S)-2-succinylamino-6-oxoheptanedioate + CoA. Its pathway is amino-acid biosynthesis; L-lysine biosynthesis via DAP pathway; LL-2,6-diaminopimelate from (S)-tetrahydrodipicolinate (succinylase route): step 1/3. This chain is 2,3,4,5-tetrahydropyridine-2,6-dicarboxylate N-succinyltransferase, found in Laribacter hongkongensis (strain HLHK9).